A 368-amino-acid chain; its full sequence is GTPase Obg (368 aa).

Residues 1-159 (MQFIDQAEIE…RQLRLELKLL (159 aa)) form the Obg domain. The region spanning 160–328 (AEVGIIGLPN…LMQLVWQWLD (169 aa)) is the OBG-type G domain. GTP is bound by residues 166–173 (GLPNAGKS), 191–195 (FTTLV), 213–216 (DIPG), 280–283 (NKID), and 309–311 (SAA). Residues serine 173 and threonine 193 each coordinate Mg(2+).

This sequence belongs to the TRAFAC class OBG-HflX-like GTPase superfamily. OBG GTPase family. As to quaternary structure, monomer. Requires Mg(2+) as cofactor.

The protein localises to the cytoplasm. Functionally, an essential GTPase which binds GTP, GDP and possibly (p)ppGpp with moderate affinity, with high nucleotide exchange rates and a fairly low GTP hydrolysis rate. Plays a role in control of the cell cycle, stress response, ribosome biogenesis and in those bacteria that undergo differentiation, in morphogenesis control. This Synechocystis sp. (strain ATCC 27184 / PCC 6803 / Kazusa) protein is GTPase Obg.